Here is a 174-residue protein sequence, read N- to C-terminus: Period clock protein (174 aa).

The segment at 46–134 (SSEGTGAGTG…GTGTGTGTGT (89 aa)) is disordered. 45 consecutive repeat copies span residues 49–50 (GT), 51–52 (GA), 53–54 (GT), 55–56 (GT), 57–58 (GT), 59–60 (GT), 61–62 (GT), 63–64 (GT), 65–66 (GT), 67–68 (GT), 69–70 (GT), 71–72 (GT), 73–74 (GT), 75–76 (GT), 77–78 (GT), 79–80 (GT), 81–82 (GT), 83–84 (GT), 85–86 (GT), 87–88 (GT), 89–90 (GT), 91–92 (GT), 93–94 (GT), 95–96 (GT), 97–98 (GT), 99–100 (GT), 101–102 (GT), 103–104 (GT), 105–106 (GT), 107–108 (GT), 109–110 (GT), 111–112 (GT), 113–114 (GT), 115–116 (GT), 117–118 (GT), 119–120 (GT), 121–122 (GT), 123–124 (GT), 125–126 (GT), 127–128 (GT), 129–130 (GT), 131–132 (GT), 133–134 (GT), 135–136 (GT), and 137–138 (GT). Positions 49–138 (GTGAGTGTGT…GTGTGTGTGT (90 aa)) are 45 X 2 AA tandem repeats of G-[TA]. Residues 50–134 (TGAGTGTGTG…GTGTGTGTGT (85 aa)) show a composition bias toward gly residues.

Its subcellular location is the plastid. It is found in the chloroplast. This Acetabularia acetabulum (Mermaid's wine glass) protein is Period clock protein.